We begin with the raw amino-acid sequence, 442 residues long: Histidine--tRNA ligase (442 aa).

The segment at 416 to 442 is disordered; that stretch reads SGDETTVPVEEFPPEGGEELPTYEDYE. Residues 427 to 442 show a composition bias toward acidic residues; sequence FPPEGGEELPTYEDYE.

Belongs to the class-II aminoacyl-tRNA synthetase family.

The protein localises to the cytoplasm. The catalysed reaction is tRNA(His) + L-histidine + ATP = L-histidyl-tRNA(His) + AMP + diphosphate + H(+). This Halorubrum lacusprofundi (strain ATCC 49239 / DSM 5036 / JCM 8891 / ACAM 34) protein is Histidine--tRNA ligase.